We begin with the raw amino-acid sequence, 361 residues long: 3-dehydroquinate synthase (361 aa).

NAD(+)-binding positions include 60–65 (DAEAAK), 94–98 (GATTD), 118–119 (TT), Lys131, and Lys140. 3 residues coordinate Zn(2+): Glu173, His242, and His258.

It belongs to the sugar phosphate cyclases superfamily. Dehydroquinate synthase family. The cofactor is Co(2+). Requires Zn(2+) as cofactor. It depends on NAD(+) as a cofactor.

It localises to the cytoplasm. The catalysed reaction is 7-phospho-2-dehydro-3-deoxy-D-arabino-heptonate = 3-dehydroquinate + phosphate. The protein operates within metabolic intermediate biosynthesis; chorismate biosynthesis; chorismate from D-erythrose 4-phosphate and phosphoenolpyruvate: step 2/7. Its function is as follows. Catalyzes the conversion of 3-deoxy-D-arabino-heptulosonate 7-phosphate (DAHP) to dehydroquinate (DHQ). This Cutibacterium acnes (strain DSM 16379 / KPA171202) (Propionibacterium acnes) protein is 3-dehydroquinate synthase.